The sequence spans 167 residues: NAD(P)H-quinone oxidoreductase subunit I, chloroplastic (167 aa).

4Fe-4S ferredoxin-type domains are found at residues 55–84 (GRIHFEFDKCIACEVCVRVCPIDLPVVDWK) and 95–124 (LNYSIDFGICIFCGNCVEYCPTNCLSMTEE). Positions 64, 67, 70, 74, 104, 107, 110, and 114 each coordinate [4Fe-4S] cluster.

The protein belongs to the complex I 23 kDa subunit family. NDH is composed of at least 16 different subunits, 5 of which are encoded in the nucleus. [4Fe-4S] cluster serves as cofactor.

It localises to the plastid. Its subcellular location is the chloroplast thylakoid membrane. It catalyses the reaction a plastoquinone + NADH + (n+1) H(+)(in) = a plastoquinol + NAD(+) + n H(+)(out). The catalysed reaction is a plastoquinone + NADPH + (n+1) H(+)(in) = a plastoquinol + NADP(+) + n H(+)(out). Its function is as follows. NDH shuttles electrons from NAD(P)H:plastoquinone, via FMN and iron-sulfur (Fe-S) centers, to quinones in the photosynthetic chain and possibly in a chloroplast respiratory chain. The immediate electron acceptor for the enzyme in this species is believed to be plastoquinone. Couples the redox reaction to proton translocation, and thus conserves the redox energy in a proton gradient. This is NAD(P)H-quinone oxidoreductase subunit I, chloroplastic from Aethionema cordifolium (Lebanon stonecress).